A 327-amino-acid chain; its full sequence is Zinc transport protein ZntB (327 aa).

Topologically, residues 1-271 (MDVVEGKALQ…AMNRRTYTMS (271 aa)) are cytoplasmic. A helical transmembrane segment spans residues 272–292 (LLAMVFLPTTFLTGLFGVNLG). The Periplasmic segment spans residues 293–300 (GIPGNTDA). A helical membrane pass occupies residues 301–321 (FGFTIFCMMLVVLVLSVAWWL). At 322–327 (KRSKWL) the chain is on the cytoplasmic side.

It belongs to the CorA metal ion transporter (MIT) (TC 1.A.35) family.

It localises to the cell inner membrane. It carries out the reaction Zn(2+)(out) + H(+)(out) = Zn(2+)(in) + H(+)(in). Functionally, zinc transporter. Acts as a Zn(2+):proton symporter, which likely mediates zinc ion uptake. This is Zinc transport protein ZntB from Yersinia pseudotuberculosis serotype O:1b (strain IP 31758).